The primary structure comprises 281 residues: NADPH-dependent 7-cyano-7-deazaguanine reductase (281 aa).

Substrate is bound at residue 87–89; that stretch reads VES. 89-90 is an NADPH binding site; that stretch reads SK. C188 acts as the Thioimide intermediate in catalysis. D195 serves as the catalytic Proton donor. Residue 227–228 participates in substrate binding; the sequence is HE. NADPH is bound at residue 256–257; sequence RG.

The protein belongs to the GTP cyclohydrolase I family. QueF type 2 subfamily. In terms of assembly, homodimer.

The protein resides in the cytoplasm. The enzyme catalyses 7-aminomethyl-7-carbaguanine + 2 NADP(+) = 7-cyano-7-deazaguanine + 2 NADPH + 3 H(+). Its pathway is tRNA modification; tRNA-queuosine biosynthesis. Catalyzes the NADPH-dependent reduction of 7-cyano-7-deazaguanine (preQ0) to 7-aminomethyl-7-deazaguanine (preQ1). The sequence is that of NADPH-dependent 7-cyano-7-deazaguanine reductase from Aliivibrio fischeri (strain ATCC 700601 / ES114) (Vibrio fischeri).